We begin with the raw amino-acid sequence, 241 residues long: Probable FKBP-type peptidyl-prolyl cis-trans isomerase (241 aa).

The region spanning 150-241 is the PPIase FKBP-type domain; that stretch reads TDTVKVHYTG…VLDVNPKSEK (92 aa).

Belongs to the FKBP-type PPIase family.

The catalysed reaction is [protein]-peptidylproline (omega=180) = [protein]-peptidylproline (omega=0). Its function is as follows. PPIases accelerate the folding of proteins. It catalyzes the cis-trans isomerization of proline imidic peptide bonds in oligopeptides. The chain is Probable FKBP-type peptidyl-prolyl cis-trans isomerase from Haemophilus influenzae (strain ATCC 51907 / DSM 11121 / KW20 / Rd).